The chain runs to 280 residues: Ribosomal RNA small subunit methyltransferase A (280 aa).

The S-adenosyl-L-methionine site is built by histidine 15, leucine 17, glycine 42, glutamate 64, aspartate 89, and asparagine 109.

This sequence belongs to the class I-like SAM-binding methyltransferase superfamily. rRNA adenine N(6)-methyltransferase family. RsmA subfamily.

It localises to the cytoplasm. The catalysed reaction is adenosine(1518)/adenosine(1519) in 16S rRNA + 4 S-adenosyl-L-methionine = N(6)-dimethyladenosine(1518)/N(6)-dimethyladenosine(1519) in 16S rRNA + 4 S-adenosyl-L-homocysteine + 4 H(+). Its function is as follows. Specifically dimethylates two adjacent adenosines (A1518 and A1519) in the loop of a conserved hairpin near the 3'-end of 16S rRNA in the 30S particle. May play a critical role in biogenesis of 30S subunits. This chain is Ribosomal RNA small subunit methyltransferase A, found in Prochlorococcus marinus (strain MIT 9313).